A 728-amino-acid chain; its full sequence is MNVTSKPGELVPESDVAAIMRGTHGDPFRVLGMHGGGGAPLSVRVFAPQAAEVAVLGQGGEVLAPLERIGAEGFFAGTVPGEEKFPYRLRFVSGPHEWEADDPYRFPEVLGELDEYLLGEGRHYQLYTRLGAHPAEIEGVQGVSFAVWAPNARRVSVVGAFNAWDGRRHPMRKRIGVGVWELFVPGLHTGDLYKYELLGPSGERLPLKSDPLSFAQEAPPATASVVHGLPEAEWHDAGWMQERESRQRRDAPISIYEVHAGSWRQGLDYDALAEELSAYVREMGFTHVEFLPISEHPFTGSWGYQPIGLFAPTARFGPPEGFARLVDRLHRDGIGVILDWVPAHFPSDAHGLANFDGTHLYDHADPRQGFHRDWNTQIYNFGRQEVANFLQASALFWLDRYHVDALRVDAVASMLYLDYSRNAGEWVPNRHGGRENLEAIDFLRGVNERVRLDHPGCITIAEESTAFPQVSRPVEDGGLGFGFKWNMGWMHDTLGYFRRDPIHRKHHQNDLTFGMVYAYSEDFVLPLSHDEVVHGKGSLIGQMAGDRWQKFANLRAYFGFMWAHPGKKLLFMGGEFAQEREWNHDASLDWHLLDDPSHAGMKRLVADLNREYRKRPALHRMDCDPEGFEWIDAGDSENSVLSFLRKAPGEKPVLAVCNLTPVVRSDYRIGVPEGGEWREILNSDAAIYGGSDVGNPGGLQAEEFSWHGRPASLRLTLPPLATIFVTPA.

Asp-409 serves as the catalytic Nucleophile. Glu-462 (proton donor) is an active-site residue.

Belongs to the glycosyl hydrolase 13 family. GlgB subfamily. In terms of assembly, monomer.

It catalyses the reaction Transfers a segment of a (1-&gt;4)-alpha-D-glucan chain to a primary hydroxy group in a similar glucan chain.. It participates in glycan biosynthesis; glycogen biosynthesis. Its function is as follows. Catalyzes the formation of the alpha-1,6-glucosidic linkages in glycogen by scission of a 1,4-alpha-linked oligosaccharide from growing alpha-1,4-glucan chains and the subsequent attachment of the oligosaccharide to the alpha-1,6 position. This is 1,4-alpha-glucan branching enzyme GlgB from Cereibacter sphaeroides (strain ATCC 17023 / DSM 158 / JCM 6121 / CCUG 31486 / LMG 2827 / NBRC 12203 / NCIMB 8253 / ATH 2.4.1.) (Rhodobacter sphaeroides).